We begin with the raw amino-acid sequence, 540 residues long: Transcription initiation factor IIF subunit alpha (540 aa).

Over residues methionine 1–glutamate 26 the composition is skewed to basic and acidic residues. Disordered stretches follow at residues methionine 1 to glutamine 39 and isoleucine 70 to asparagine 106. Composition is skewed to polar residues over residues serine 29–glutamine 39 and alanine 89–asparagine 106. 2 positions are modified to phosphoserine: serine 259 and serine 261. Residues methionine 280–serine 382 adopt a coiled-coil conformation. Residues tyrosine 341–serine 416 are disordered. Residues serine 359–glutamate 369 are compositionally biased toward acidic residues. The span at phenylalanine 381–serine 416 shows a compositional bias: polar residues. Serine 399 carries the phosphoserine modification.

It belongs to the TFIIF alpha subunit family. Component of the fcp1/TFIIF/polII complex via interaction of tfg3 with both tfg1/TFIIF-alpha and tfg2/TFIIF-beta subunits.

Its subcellular location is the nucleus. Functionally, TFIIF is a general transcription initiation factor that binds to RNA polymerase II and helps to recruit it to the initiation complex in collaboration with TFIIB. It promotes transcription elongation. The protein is Transcription initiation factor IIF subunit alpha (tfg1) of Schizosaccharomyces pombe (strain 972 / ATCC 24843) (Fission yeast).